An 87-amino-acid chain; its full sequence is Small ribosomal subunit protein bS20 (87 aa).

The interval M1–G22 is disordered. The segment covering S7–A19 has biased composition (basic residues).

The protein belongs to the bacterial ribosomal protein bS20 family.

In terms of biological role, binds directly to 16S ribosomal RNA. This chain is Small ribosomal subunit protein bS20, found in Marinomonas sp. (strain MWYL1).